Here is a 134-residue protein sequence, read N- to C-terminus: ATP synthase epsilon chain (134 aa).

The disordered stretch occupies residues 100 to 134; it reads NQKLQNENLSEEEKEHYEKQRSRSQALLNLASAKV. Residues 110–120 show a composition bias toward basic and acidic residues; the sequence is EEEKEHYEKQR.

It belongs to the ATPase epsilon chain family. As to quaternary structure, F-type ATPases have 2 components, CF(1) - the catalytic core - and CF(0) - the membrane proton channel. CF(1) has five subunits: alpha(3), beta(3), gamma(1), delta(1), epsilon(1). CF(0) has three main subunits: a, b and c.

Its subcellular location is the cell inner membrane. In terms of biological role, produces ATP from ADP in the presence of a proton gradient across the membrane. This chain is ATP synthase epsilon chain, found in Sulfurihydrogenibium sp. (strain YO3AOP1).